A 208-amino-acid chain; its full sequence is RNA chaperone ProQ (208 aa).

Composition is skewed to basic and acidic residues over residues 99-115 and 126-135; these read AQET…EKNK and PAKDKPENTA. A disordered region spans residues 99–149; the sequence is AQETLKESKAKVAEKNKATNKAAAKKAPAKDKPENTAKAKPKTAKKPAKPK. The span at 137 to 149 shows a compositional bias: basic residues; the sequence is AKPKTAKKPAKPK.

This sequence belongs to the ProQ family.

Its subcellular location is the cytoplasm. RNA chaperone with significant RNA binding, RNA strand exchange and RNA duplexing activities. The chain is RNA chaperone ProQ from Idiomarina loihiensis (strain ATCC BAA-735 / DSM 15497 / L2-TR).